The following is a 258-amino-acid chain: MLAIISPAKTLDFESAVKNFPVSQPHFTDYSEQLIEVCRKLSPQDLSSLMSISDKLAGLNAARFAEWTKIHNENNSRPALFAFKGDVYTGLDADSLSEDDVIFAQSHLRMLSGLYGLLKPLDLMQPYRLEMGTKLANPKGKDLYAFWGNVITQAVQQAIDAQGDNVLVNLASDEYYKSVKESQINAKIIKPVFLDNKNGKYKVISFYAKKARGLMCRYIIQHHLTEIEQLKEFDLGGYWFDSASSTETEFVFKRDINE.

This sequence belongs to the UPF0246 family.

In Haemophilus influenzae (strain PittEE), this protein is UPF0246 protein CGSHiEE_07045.